A 1040-amino-acid polypeptide reads, in one-letter code: Multidrug resistance protein MdtB (1040 aa).

Transmembrane regions (helical) follow at residues 15–37 (LFIM…GIIG), 345–362 (FELM…YLFL), 367–389 (ATII…MVFL), 396–418 (LTLM…VIEN), 438–460 (GEIG…PLLF), 472–494 (FAIT…TPMM), 535–557 (HPWL…WVFI), 867–889 (VWLI…ESFI), 909–931 (LMIA…IGIV), 968–990 (ILMT…GVGA), and 1000–1022 (MVGG…YLLF).

It belongs to the resistance-nodulation-cell division (RND) (TC 2.A.6) family. MdtB subfamily. As to quaternary structure, part of a tripartite efflux system composed of MdtA, MdtB and MdtC. MdtB forms a heteromultimer with MdtC.

It localises to the cell inner membrane. The MdtABC tripartite complex confers resistance against novobiocin and deoxycholate. This Escherichia coli O157:H7 protein is Multidrug resistance protein MdtB.